A 351-amino-acid polypeptide reads, in one-letter code: Ion-translocating oxidoreductase complex subunit D (351 aa).

The next 4 membrane-spanning stretches (helical) occupy residues 18 to 38 (IMLL…YFFG), 40 to 60 (GSLI…GAVL), 87 to 107 (LPPL…IVIA), and 121 to 141 (PAMV…TSWL). Residue T185 is modified to FMN phosphoryl threonine. A run of 5 helical transmembrane segments spans residues 211 to 231 (VLAG…GLLL), 241 to 261 (IPVS…MIAP), 264 to 284 (FASP…FFIA), 298 to 318 (LIFG…GGYP), and 321 to 341 (VAFA…YTQP).

This sequence belongs to the NqrB/RnfD family. The complex is composed of six subunits: RnfA, RnfB, RnfC, RnfD, RnfE and RnfG. The cofactor is FMN.

The protein localises to the cell inner membrane. Part of a membrane-bound complex that couples electron transfer with translocation of ions across the membrane. The polypeptide is Ion-translocating oxidoreductase complex subunit D (Yersinia pestis).